The following is a 500-amino-acid chain: Protein psiE (500 aa).

The signal sequence occupies residues 1–18; sequence MKLISVLITFLLATVIYS. Residue Asn-59 is glycosylated (N-linked (GlcNAc...) asparagine). One can recognise a PA14 domain in the interval 114 to 256; that stretch reads TYDTTRKIYV…KDYCGVCQGD (143 aa). Asn-314, Asn-341, Asn-366, Asn-420, and Asn-469 each carry an N-linked (GlcNAc...) asparagine glycan.

This sequence belongs to the prespore-cell-inducing factor family.

It localises to the secreted. This chain is Protein psiE (psiE), found in Dictyostelium discoideum (Social amoeba).